A 399-amino-acid polypeptide reads, in one-letter code: Subtilisin-like protease 4 (399 aa).

Positions methionine 1–alanine 19 are cleaved as a signal peptide. Residues arginine 20–serine 118 constitute a propeptide that is removed on maturation. Residues tyrosine 38–isoleucine 117 enclose the Inhibitor I9 domain. A Peptidase S8 domain is found at serine 128–glutamine 399. Residues aspartate 160 and histidine 191 each act as charge relay system in the active site. The N-linked (GlcNAc...) asparagine glycan is linked to asparagine 252. Residue serine 346 is the Charge relay system of the active site. Residues alanine 380 to leucine 392 show a composition bias toward polar residues. Residues alanine 380 to glutamine 399 are disordered. An N-linked (GlcNAc...) asparagine glycan is attached at asparagine 395.

This sequence belongs to the peptidase S8 family.

The protein resides in the secreted. Secreted subtilisin-like serine protease with keratinolytic activity that contributes to pathogenicity. The protein is Subtilisin-like protease 4 (SUB4) of Arthroderma gypseum (strain ATCC MYA-4604 / CBS 118893) (Microsporum gypseum).